Consider the following 230-residue polypeptide: Large ribosomal subunit protein uL1 (230 aa).

It belongs to the universal ribosomal protein uL1 family. In terms of assembly, part of the 50S ribosomal subunit.

Binds directly to 23S rRNA. The L1 stalk is quite mobile in the ribosome, and is involved in E site tRNA release. Functionally, protein L1 is also a translational repressor protein, it controls the translation of the L11 operon by binding to its mRNA. The chain is Large ribosomal subunit protein uL1 from Bifidobacterium longum subsp. infantis (strain ATCC 15697 / DSM 20088 / JCM 1222 / NCTC 11817 / S12).